A 75-amino-acid polypeptide reads, in one-letter code: Small ribosomal subunit protein bS18 (75 aa).

It belongs to the bacterial ribosomal protein bS18 family. Part of the 30S ribosomal subunit. Forms a tight heterodimer with protein bS6.

In terms of biological role, binds as a heterodimer with protein bS6 to the central domain of the 16S rRNA, where it helps stabilize the platform of the 30S subunit. This Mycoplasma capricolum subsp. capricolum (strain California kid / ATCC 27343 / NCTC 10154) protein is Small ribosomal subunit protein bS18.